We begin with the raw amino-acid sequence, 82 residues long: Envelope small membrane protein (82 aa).

The Virion surface portion of the chain corresponds to 1–16 (MLPFVHEQIGTIIVNF). A helical transmembrane segment spans residues 17 to 37 (FILTVVCAITLLVCLAVLTAI). The Intravirion segment spans residues 38 to 78 (RLCVQCASGVNTLLFVPAFYIYNTGRNAYFKFQENRPPFPP).

The protein belongs to the betacoronaviruses E protein family. As to quaternary structure, homopentamer. Interacts with membrane protein M in the budding compartment of the host cell, which is located between endoplasmic reticulum and the Golgi complex. Interacts with Nucleoprotein.

It localises to the host Golgi apparatus membrane. Functionally, plays a central role in virus morphogenesis and assembly. Acts as a viroporin and self-assembles in host membranes forming pentameric protein-lipid pores that allow ion transport. Also plays a role in the induction of apoptosis. This chain is Envelope small membrane protein, found in Tylonycteris pachypus (Lesser bamboo bat).